Here is a 442-residue protein sequence, read N- to C-terminus: Glutamate-1-semialdehyde 2,1-aminomutase (442 aa).

N6-(pyridoxal phosphate)lysine is present on lysine 282.

Belongs to the class-III pyridoxal-phosphate-dependent aminotransferase family. HemL subfamily. In terms of assembly, homodimer. It depends on pyridoxal 5'-phosphate as a cofactor.

The protein resides in the cytoplasm. It catalyses the reaction (S)-4-amino-5-oxopentanoate = 5-aminolevulinate. It functions in the pathway porphyrin-containing compound metabolism; protoporphyrin-IX biosynthesis; 5-aminolevulinate from L-glutamyl-tRNA(Glu): step 2/2. This chain is Glutamate-1-semialdehyde 2,1-aminomutase, found in Polaromonas naphthalenivorans (strain CJ2).